A 208-amino-acid polypeptide reads, in one-letter code: Thymidylate kinase (208 aa).

An ATP-binding site is contributed by Gly10–Thr17.

It belongs to the thymidylate kinase family.

It carries out the reaction dTMP + ATP = dTDP + ADP. In terms of biological role, phosphorylation of dTMP to form dTDP in both de novo and salvage pathways of dTTP synthesis. In Bacillus cereus (strain ATCC 10987 / NRS 248), this protein is Thymidylate kinase.